We begin with the raw amino-acid sequence, 295 residues long: Protoheme IX farnesyltransferase 2 (295 aa).

9 consecutive transmembrane segments (helical) span residues Ile-9–Ala-29, Phe-36–Phe-56, Leu-83–Val-103, Leu-108–Leu-128, Gly-135–Ser-155, Val-163–Phe-183, Ile-209–Ala-229, Gly-230–Gly-250, and Val-264–Gln-284.

This sequence belongs to the UbiA prenyltransferase family. Protoheme IX farnesyltransferase subfamily.

Its subcellular location is the cell inner membrane. It catalyses the reaction heme b + (2E,6E)-farnesyl diphosphate + H2O = Fe(II)-heme o + diphosphate. Its pathway is porphyrin-containing compound metabolism; heme O biosynthesis; heme O from protoheme: step 1/1. In terms of biological role, converts heme B (protoheme IX) to heme O by substitution of the vinyl group on carbon 2 of heme B porphyrin ring with a hydroxyethyl farnesyl side group. The sequence is that of Protoheme IX farnesyltransferase 2 from Pseudomonas putida (strain ATCC 47054 / DSM 6125 / CFBP 8728 / NCIMB 11950 / KT2440).